The sequence spans 378 residues: Chaperone protein DnaJ (378 aa).

The region spanning 5–70 (DYYEVLGVAK…QKRAAYDQYG (66 aa)) is the J domain. The segment at 138–216 (GYDTQIRVPS…CHGSGKVKET (79 aa)) adopts a CR-type zinc-finger fold. 8 residues coordinate Zn(2+): Cys151, Cys154, Cys168, Cys171, Cys190, Cys193, Cys204, and Cys207. 4 CXXCXGXG motif repeats span residues 151–158 (CEVCHGSG), 168–175 (CPTCHGQG), 190–197 (CPKCHGTG), and 204–211 (CVHCHGSG).

The protein belongs to the DnaJ family. Homodimer. It depends on Zn(2+) as a cofactor.

The protein localises to the cytoplasm. Functionally, participates actively in the response to hyperosmotic and heat shock by preventing the aggregation of stress-denatured proteins and by disaggregating proteins, also in an autonomous, DnaK-independent fashion. Unfolded proteins bind initially to DnaJ; upon interaction with the DnaJ-bound protein, DnaK hydrolyzes its bound ATP, resulting in the formation of a stable complex. GrpE releases ADP from DnaK; ATP binding to DnaK triggers the release of the substrate protein, thus completing the reaction cycle. Several rounds of ATP-dependent interactions between DnaJ, DnaK and GrpE are required for fully efficient folding. Also involved, together with DnaK and GrpE, in the DNA replication of plasmids through activation of initiation proteins. In Burkholderia ambifaria (strain MC40-6), this protein is Chaperone protein DnaJ.